The primary structure comprises 149 residues: MNVFLSKYVNGVDKKSRVSVPANYRAVLGKELFNGVIAYPSIRNNCIEVCGISHIEKLRQMTETLDPYSEERDAFETMIFGEAVQLSFDGEGRVILPQSLMKHAGIEEQACFVGKGVIFEIWQPQNFEKYLNAAQKIAHEKRLTLRNAH.

2 consecutive SpoVT-AbrB domains span residues 7–54 and 83–126; these read KYVN…GISH and AVQL…QPQN.

The protein belongs to the MraZ family. In terms of assembly, forms oligomers.

It localises to the cytoplasm. Its subcellular location is the nucleoid. This is Transcriptional regulator MraZ from Rickettsia peacockii (strain Rustic).